A 375-amino-acid chain; its full sequence is 3-dehydroquinate synthase (375 aa).

NAD(+) is bound by residues 82–87 (SGETSK), 116–120 (GVVGD), 140–141 (TT), Lys-153, and Lys-162. Residues Glu-195, His-259, and His-276 each contribute to the Zn(2+) site.

It belongs to the sugar phosphate cyclases superfamily. Dehydroquinate synthase family. The cofactor is NAD(+). Co(2+) serves as cofactor. Requires Zn(2+) as cofactor.

Its subcellular location is the cytoplasm. It catalyses the reaction 7-phospho-2-dehydro-3-deoxy-D-arabino-heptonate = 3-dehydroquinate + phosphate. The protein operates within metabolic intermediate biosynthesis; chorismate biosynthesis; chorismate from D-erythrose 4-phosphate and phosphoenolpyruvate: step 2/7. Functionally, catalyzes the conversion of 3-deoxy-D-arabino-heptulosonate 7-phosphate (DAHP) to dehydroquinate (DHQ). The sequence is that of 3-dehydroquinate synthase from Rhodopirellula baltica (strain DSM 10527 / NCIMB 13988 / SH1).